Consider the following 62-residue polypeptide: Photosystem II reaction center protein Z (62 aa).

2 helical membrane-spanning segments follow: residues 8 to 28 (ALAA…VAYA) and 41 to 61 (FVGS…NFFV).

This sequence belongs to the PsbZ family. PSII is composed of 1 copy each of membrane proteins PsbA, PsbB, PsbC, PsbD, PsbE, PsbF, PsbH, PsbI, PsbJ, PsbK, PsbL, PsbM, PsbT, PsbX, PsbY, PsbZ, Psb30/Ycf12, peripheral proteins PsbO, CyanoQ (PsbQ), PsbU, PsbV and a large number of cofactors. It forms dimeric complexes.

The protein localises to the cellular thylakoid membrane. Its function is as follows. May control the interaction of photosystem II (PSII) cores with the light-harvesting antenna, regulates electron flow through the 2 photosystem reaction centers. PSII is a light-driven water plastoquinone oxidoreductase, using light energy to abstract electrons from H(2)O, generating a proton gradient subsequently used for ATP formation. This Picosynechococcus sp. (strain ATCC 27264 / PCC 7002 / PR-6) (Agmenellum quadruplicatum) protein is Photosystem II reaction center protein Z.